Consider the following 224-residue polypeptide: UPF0173 metal-dependent hydrolase TON_1314 (224 aa).

The protein belongs to the UPF0173 family.

This is UPF0173 metal-dependent hydrolase TON_1314 from Thermococcus onnurineus (strain NA1).